The following is a 307-amino-acid chain: Beta-lactamase (307 aa).

Residues 1 to 26 form the signal peptide; it reads MKLWFSTLKLKKAAAVLLFSCVALAG. Cysteine 27 carries N-palmitoyl cysteine lipidation. Cysteine 27 carries S-diacylglycerol cysteine lipidation. The active-site Acyl-ester intermediate is serine 86. The active-site Proton acceptor is the glutamate 182. 248-250 provides a ligand contact to substrate; it reads KTG.

The protein belongs to the class-A beta-lactamase family. Large exopenicillinase is the primary secretion product; it can be converted to small exopenicillinase.

The protein localises to the cell membrane. It carries out the reaction a beta-lactam + H2O = a substituted beta-amino acid. The polypeptide is Beta-lactamase (penP) (Bacillus licheniformis).